A 271-amino-acid chain; its full sequence is Formamidopyrimidine-DNA glycosylase (271 aa).

Proline 2 acts as the Schiff-base intermediate with DNA in catalysis. Catalysis depends on glutamate 3, which acts as the Proton donor. Catalysis depends on lysine 58, which acts as the Proton donor; for beta-elimination activity. Residues histidine 92, arginine 111, and arginine 152 each contribute to the DNA site. Residues 237–271 (MVYGREGEACRHCGGELKHATIGQRATVWCAACQR) form an FPG-type zinc finger. Arginine 261 serves as the catalytic Proton donor; for delta-elimination activity.

The protein belongs to the FPG family. Monomer. Requires Zn(2+) as cofactor.

The enzyme catalyses Hydrolysis of DNA containing ring-opened 7-methylguanine residues, releasing 2,6-diamino-4-hydroxy-5-(N-methyl)formamidopyrimidine.. It catalyses the reaction 2'-deoxyribonucleotide-(2'-deoxyribose 5'-phosphate)-2'-deoxyribonucleotide-DNA = a 3'-end 2'-deoxyribonucleotide-(2,3-dehydro-2,3-deoxyribose 5'-phosphate)-DNA + a 5'-end 5'-phospho-2'-deoxyribonucleoside-DNA + H(+). In terms of biological role, involved in base excision repair of DNA damaged by oxidation or by mutagenic agents. Acts as a DNA glycosylase that recognizes and removes damaged bases. Has a preference for oxidized purines, such as 7,8-dihydro-8-oxoguanine (8-oxoG). Has AP (apurinic/apyrimidinic) lyase activity and introduces nicks in the DNA strand. Cleaves the DNA backbone by beta-delta elimination to generate a single-strand break at the site of the removed base with both 3'- and 5'-phosphates. This is Formamidopyrimidine-DNA glycosylase from Xanthomonas campestris pv. campestris (strain ATCC 33913 / DSM 3586 / NCPPB 528 / LMG 568 / P 25).